The following is a 238-amino-acid chain: Ion-translocating oxidoreductase complex subunit E (238 aa).

Transmembrane regions (helical) follow at residues leucine 41–valine 61, leucine 71–alanine 91, glutamate 95–glycine 115, serine 130–leucine 150, and glycine 184–leucine 204.

Belongs to the NqrDE/RnfAE family. The complex is composed of six subunits: RnfA, RnfB, RnfC, RnfD, RnfE and RnfG.

The protein resides in the cell inner membrane. Functionally, part of a membrane-bound complex that couples electron transfer with translocation of ions across the membrane. The sequence is that of Ion-translocating oxidoreductase complex subunit E from Pseudomonas aeruginosa (strain UCBPP-PA14).